Here is a 312-residue protein sequence, read N- to C-terminus: Probable deoxyhypusine synthase (312 aa).

K285 functions as the Nucleophile in the catalytic mechanism.

The protein belongs to the deoxyhypusine synthase family. It depends on NAD(+) as a cofactor.

The catalysed reaction is [eIF5A protein]-L-lysine + spermidine = [eIF5A protein]-deoxyhypusine + propane-1,3-diamine. It participates in protein modification; eIF5A hypusination. Catalyzes the NAD-dependent oxidative cleavage of spermidine and the subsequent transfer of the butylamine moiety of spermidine to the epsilon-amino group of a specific lysine residue of the eIF-5A precursor protein to form the intermediate deoxyhypusine residue. The chain is Probable deoxyhypusine synthase from Saccharolobus islandicus (strain Y.N.15.51 / Yellowstone #2) (Sulfolobus islandicus).